The chain runs to 156 residues: Transcriptional repressor NrdR (156 aa).

A zinc finger lies at 3–34 (CPYCGHLEDRVVDSRETQDGQATRRRRACLSC). The ATP-cone domain occupies 49–139 (PQVVKKDGRR…VYRAFRDVGE (91 aa)).

It belongs to the NrdR family. The cofactor is Zn(2+).

Negatively regulates transcription of bacterial ribonucleotide reductase nrd genes and operons by binding to NrdR-boxes. In Anaeromyxobacter dehalogenans (strain 2CP-C), this protein is Transcriptional repressor NrdR.